The chain runs to 433 residues: Ornithine decarboxylase 1B, chloroplastic (433 aa).

K96 is subject to N6-(pyridoxal phosphate)lysine. Residues S228, G266, and 299–302 (EPGR) each bind pyridoxal 5'-phosphate. Substrate is bound at residue 342-343 (YD). Residue C378 is the Proton donor; shared with dimeric partner of the active site. D379 provides a ligand contact to substrate. Pyridoxal 5'-phosphate is bound at residue Y407.

The protein belongs to the Orn/Lys/Arg decarboxylase class-II family. In terms of assembly, homodimer. Only the dimer is catalytically active, as the active sites are constructed of residues from both monomers. It depends on pyridoxal 5'-phosphate as a cofactor.

Its subcellular location is the plastid. The protein resides in the chloroplast. It carries out the reaction L-ornithine + H(+) = putrescine + CO2. It participates in alkaloid biosynthesis; nicotine biosynthesis. The protein operates within amine and polyamine biosynthesis; putrescine biosynthesis via L-ornithine pathway; putrescine from L-ornithine: step 1/1. Involved in the biosynthesis of pyridine alkaloid natural products, leading mainly to the production of anabasine, anatabine, nicotine and nornicotine, effective deterrents against herbivores with antiparasitic and pesticide properties (neurotoxins); nornicotine serves as the precursor in the synthesis of the carcinogen compound N'-nitrosonornicotine (NNN). Catalyzes the first and rate-limiting step of polyamine biosynthesis that converts ornithine into putrescine, which is the precursor for the polyamines, spermidine and spermine. Polyamines are essential for cell proliferation and are implicated in cellular processes, ranging from DNA replication to apoptosis. The chain is Ornithine decarboxylase 1B, chloroplastic from Nicotiana tabacum (Common tobacco).